The following is a 489-amino-acid chain: MSNAALQVYGGDEVSAVVIDPGSYTTNIGYSGSDFPQSILPSVYGKYTADEGNKKIFSEQSIGIPRKDYELKPIIENGLVIDWDTAQEQWQWALQNELYLNSNSGIPALLTEPVWNSTENRKKSLEVLLEGMQFEACYLAPTSTCVSFAAGRPNCLVVDIGHDTCSVSPIVDGMTLSKSTRRNFIAGKFINHLIKKALEPKEIIPLFAIKQRKPEFIKKTFDYEVDKSLYDYANNRGFFQECKETLCHICPTKTLEETKTELSSTAKRSIESPWNEEIVFDNETRYGFAEELFLPKEDDIPANWPRSNSGVVKTWRNDYVPLKRTKPSGVNKSDKKVTPTEEKEQEAVSKSTSPAANSADTPNETGKRPLEEEKPPKENNELIGLADLVYSSIMSSDVDLRATLAHNVVLTGGTSSIPGLSDRLMTELNKILPSLKFRILTTGHTIERQYQSWLGGSILTSLGTFHQLWVGKKEYEEVGVERLLNDRFR.

The disordered stretch occupies residues 323-379 (KRTKPSGVNKSDKKVTPTEEKEQEAVSKSTSPAANSADTPNETGKRPLEEEKPPKEN). Positions 332-347 (KSDKKVTPTEEKEQEA) are enriched in basic and acidic residues. A compositionally biased stretch (polar residues) spans 348–364 (VSKSTSPAANSADTPNE). Position 349 is a phosphoserine (Ser-349). Over residues 365-379 (TGKRPLEEEKPPKEN) the composition is skewed to basic and acidic residues.

Belongs to the actin family. ARP4 subfamily. In terms of assembly, component of the NuA4 histone acetyltransferase complex composed of at least ACT1, ARP4, EAF3, EAF5, EAF6, EAF7, EPL1, ESA1, SWC4, TRA1, VID21, YAF9 and YNG2. Component of the chromatin-remodeling INO80 complex, at least composed of ARP4, ARP5, ARP8, RVB1, RVB2, TAF14, NHP10, IES1, IES3, IES4, IES6, ACT1, IES2, IES5 and INO80. Component of the SWR1 chromatin remodeling complex composed of at least ACT1, ARP4, RVB1, RVB2, ARP6, YAF9, VPS71, VPS72, SWC3, SWC4, SWC5, SWC7 and SWR1, and perhaps BDF1. Interacts with histones H4 (HHF1 and HHF2), H3 (HHT1 and HHT2) and H2A (HTA1 and HTA2).

The protein localises to the nucleus. Its function is as follows. Chromatin interaction component of the NuA4 histone acetyltransferase complex which is involved in transcriptional activation of selected genes principally by acetylation of nucleosomal histone H4 and H2A. The NuA4 complex is also involved in DNA repair. ARP4 recognizes H2AS128ph (gamma-H2A) and is required for NuA4 complex integrity. Component of the SWR1 complex which mediates the ATP-dependent exchange of histone H2A for the H2A variant HZT1 leading to transcriptional regulation of selected genes by chromatin remodeling. Component of the INO80 complex which remodels chromatin by shifting nucleosomes. Its ability to induce transcription of some phosphate-responsive genes is modulated by inositol polyphosphates. The INO80 complex is involved in DNA repair by associating to gamma-H2A as a response to DNA damage. The polypeptide is Actin-related protein 4 (ARP4) (Saccharomyces cerevisiae (strain ATCC 204508 / S288c) (Baker's yeast)).